Here is a 180-residue protein sequence, read N- to C-terminus: ATP-dependent protease subunit HslV (180 aa).

Thr-5 is a catalytic residue. Positions 161, 164, and 167 each coordinate Na(+).

Belongs to the peptidase T1B family. HslV subfamily. A double ring-shaped homohexamer of HslV is capped on each side by a ring-shaped HslU homohexamer. The assembly of the HslU/HslV complex is dependent on binding of ATP.

Its subcellular location is the cytoplasm. It catalyses the reaction ATP-dependent cleavage of peptide bonds with broad specificity.. Allosterically activated by HslU binding. Functionally, protease subunit of a proteasome-like degradation complex believed to be a general protein degrading machinery. The sequence is that of ATP-dependent protease subunit HslV from Campylobacter jejuni subsp. doylei (strain ATCC BAA-1458 / RM4099 / 269.97).